The chain runs to 159 residues: Early E3 18.5 kDa glycoprotein (159 aa).

Positions 1–17 are cleaved as a signal peptide; that stretch reads MRYMILGLLALAAVCSA. Residues 18 to 123 lie on the Lumenal side of the membrane; the sequence is AKKVEFKEPA…PPQKCLENTG (106 aa). 2 disulfide bridges follow: cysteine 28–cysteine 45 and cysteine 39–cysteine 100. N-linked (GlcNAc...) asparagine; by host glycans are attached at residues asparagine 29 and asparagine 78. The helical transmembrane segment at 124-144 threads the bilayer; that stretch reads TFCSTALLITALALVCTLLYL. The Cytoplasmic segment spans residues 145–159; that stretch reads KYKSRRSFIDEKKMP. The short motif at 156–159 is the Di-lysine motif element; it reads KKMP.

The protein belongs to the adenoviridae E19 family. Both disulfide bonds are absolutely critical for the interaction with MHC antigens. In terms of processing, N-glycosylated; high-mannose.

The protein resides in the host endoplasmic reticulum membrane. In terms of biological role, binds and retains class I heavy chains in the endoplasmic reticulum during the early period of virus infection, thereby impairing their transport to the cell surface. Also delays the expression of class I alleles that it cannot affect by direct retention. Binds transporters associated with antigen processing (TAP) and acts as a tapasin inhibitor, preventing class I/TAP association. In consequence, infected cells are masked for immune recognition by cytotoxic T-lymphocytes. The sequence is that of Early E3 18.5 kDa glycoprotein from Homo sapiens (Human).